We begin with the raw amino-acid sequence, 113 residues long: uncharacterized protein (113 aa).

A signal peptide spans 1–19 (MLSPLSPRIIAAFTTAVGA).

The protein to M.tuberculosis Rv1291c.

This is an uncharacterized protein from Mycobacterium tuberculosis (strain CDC 1551 / Oshkosh).